Here is a 386-residue protein sequence, read N- to C-terminus: Short-chain dehydrogenase/reductase family 42E member 1 (386 aa).

Tyr150 acts as the Proton acceptor in catalysis. Lys154 is an NAD(+) binding site. A run of 2 helical transmembrane segments spans residues 279-299 and 363-383; these read FPLS…FFIS and YLIW…SWLP.

This sequence belongs to the 3-beta-HSD family.

It localises to the membrane. The chain is Short-chain dehydrogenase/reductase family 42E member 1 (sdr42e1) from Xenopus laevis (African clawed frog).